Here is a 158-residue protein sequence, read N- to C-terminus: UPF0225 protein Pfl01_1218 (158 aa).

Belongs to the UPF0225 family.

The polypeptide is UPF0225 protein Pfl01_1218 (Pseudomonas fluorescens (strain Pf0-1)).